The chain runs to 316 residues: Retinol dehydrogenase 12 (316 aa).

46–52 (GANTGIG) contributes to the NADP(+) binding site. Ser175 provides a ligand contact to substrate. Tyr200 acts as the Proton acceptor in catalysis.

It belongs to the short-chain dehydrogenases/reductases (SDR) family. As to expression, widely expressed, mostly in retina, kidney, brain, skeletal muscle, pancreas and stomach.

It localises to the endoplasmic reticulum membrane. It carries out the reaction all-trans-retinol + NADP(+) = all-trans-retinal + NADPH + H(+). It catalyses the reaction 11-cis-retinol + NADP(+) = 11-cis-retinal + NADPH + H(+). The enzyme catalyses 9-cis-retinol + NADP(+) = 9-cis-retinal + NADPH + H(+). The catalysed reaction is a 4-hydroxynonen-1-ol + NADP(+) = a 4-hydroxynonenal + NADPH + H(+). It carries out the reaction (E)-non-2-en-1-ol + NADP(+) = (E)-non-2-enal + NADPH + H(+). It catalyses the reaction (Z)-non-6-en-1-ol + NADP(+) = (Z)-non-6-enal + NADPH + H(+). The enzyme catalyses nonan-1-ol + NADP(+) = nonanal + NADPH + H(+). Its pathway is cofactor metabolism; retinol metabolism. Its function is as follows. Retinoids dehydrogenase/reductase with a clear preference for NADP. Displays high activity towards 9-cis, 11-cis and all-trans-retinal. Shows very weak activity towards 13-cis-retinol. Also exhibits activity, albeit with lower affinity than for retinaldehydes, towards lipid peroxidation products (C9 aldehydes) such as 4-hydroxynonenal and trans-2-nonenal. May play an important function in photoreceptor cells to detoxify 4-hydroxynonenal and potentially other toxic aldehyde products resulting from lipid peroxidation. Has no dehydrogenase activity towards steroids. The protein is Retinol dehydrogenase 12 (RDH12) of Homo sapiens (Human).